Reading from the N-terminus, the 511-residue chain is MKKRALVSVSDKTGVVEFVKGLLEQGIEVISTGGTKKLLEANGLQVIGISEVTGFPEIMDGRVKTLHPNIHGGLLAVRDNETHVIQMNELGIQPIDFVVVNLYPFKETIAKPDVTFADAIENIDIGGPTMIRSAAKNHQFVSVIVDPVDYDVVLAELKENGEVMDETKRKLAAKVFRHTAAYDALISNYLTEQMGEESPETLTVTFEKKQDLRYGENPHQKATFYKAPFAATSSVAYAEQLHGKELSYNNINDADAALSIVKEFTEPAVVAVKHMNPCGVGVGTDIHEAYTRAYEADPVSIFGGIIAANREIDKATAEKLHEIFLEIIIAPSFSKEALEVLQSKKNLRLLTVNIEKATSASKKLTSVQGGLLVQEEDTLSLDESTISIPTKREPSEQEWKDLKLAWKVVKHVKSNAIVLAKDDMTIGVGAGQMNRVGSAKIAITQAGEKAQGSALASDAFFPMPDTLEEAAKAGITAIIQPGGSIRDEDSIKVADTYGIAMVFTGVRHFKH.

An MGS-like domain is found at 1 to 145 (MKKRALVSVS…KNHQFVSVIV (145 aa)).

Belongs to the PurH family.

The catalysed reaction is (6R)-10-formyltetrahydrofolate + 5-amino-1-(5-phospho-beta-D-ribosyl)imidazole-4-carboxamide = 5-formamido-1-(5-phospho-D-ribosyl)imidazole-4-carboxamide + (6S)-5,6,7,8-tetrahydrofolate. The enzyme catalyses IMP + H2O = 5-formamido-1-(5-phospho-D-ribosyl)imidazole-4-carboxamide. It participates in purine metabolism; IMP biosynthesis via de novo pathway; 5-formamido-1-(5-phospho-D-ribosyl)imidazole-4-carboxamide from 5-amino-1-(5-phospho-D-ribosyl)imidazole-4-carboxamide (10-formyl THF route): step 1/1. Its pathway is purine metabolism; IMP biosynthesis via de novo pathway; IMP from 5-formamido-1-(5-phospho-D-ribosyl)imidazole-4-carboxamide: step 1/1. This is Bifunctional purine biosynthesis protein PurH from Bacillus cereus (strain G9842).